The primary structure comprises 214 residues: MKKILVIDDHPAVMEGTKTILETDSNLSVDCLSPEPSEQFIKQHDFSSYDLILMDLNLGGEVNGMELSKQILQENPHCKIIVYTGYEVEDYFEEAIRAGLHGAISKTESKEKITQYIYHVLNGEILVDFAYFKQLMTQQKTKPAPSSQKEQDVLTPRECLILQEVEKGFTNQEIADALHLSKRSIEYSLTSIFNKLNVGSRTEAVLIAKSDGVL.

In terms of domain architecture, Response regulatory spans 3 to 121 (KILVIDDHPA…KITQYIYHVL (119 aa)). At Asp-55 the chain carries 4-aspartylphosphate. In terms of domain architecture, HTH luxR-type spans 147–212 (SQKEQDVLTP…EAVLIAKSDG (66 aa)). The segment at residues 171–190 (NQEIADALHLSKRSIEYSLT) is a DNA-binding region (H-T-H motif).

Post-translationally, phosphorylated by ComP.

The protein localises to the cytoplasm. Response regulator in the two-component regulatory system ComP/ComA involved in a major quorum response pathway that regulates the development of genetic competence. Regulates directly the expression of over 20 genes, including genes of the srfA operon, degQ, rapA, rapC, rapE, rapF, etc. Regulates indirectly, through the regulation of comK transcription, the expression of late competence genes. The chain is Transcriptional regulatory protein ComA (comA) from Bacillus subtilis (strain 168).